We begin with the raw amino-acid sequence, 24 residues long: Brevinin-1Ra (24 aa).

A disulfide bond links cysteine 18 and cysteine 24.

In terms of tissue distribution, expressed by the skin glands.

Its subcellular location is the secreted. Its function is as follows. Antimicrobial peptide. This Pelophylax ridibundus (Marsh frog) protein is Brevinin-1Ra.